Consider the following 295-residue polypeptide: MRRLEGSMVAIVTPMKDGAVDLRALRELAEWQLAEGTDGIVPCGTTGEGVTLTPAERADVIRTVIETVRGRALVIAGAGSNATHEAIESVKLAKTLGADAALVVTPYYNKPTQEGLFRHYQAIWEATRFPVVAYNVPSRTSVDLLPETVARLAKAGAIAGIKEATANMDRQVQLVEKVGKDAIAYLSGDDFTVLPYVACGGHGVISVIANIAPRAMKELVVAARSGDLAGALAKQAAMAELNRMMFVETNPGPVKAAVALLGRSGGELRLPLAPVSEASLAKVRDAMVRFGLKLA.

T46 serves as a coordination point for pyruvate. Catalysis depends on Y134, which acts as the Proton donor/acceptor. The active-site Schiff-base intermediate with substrate is the K162. Residue I205 coordinates pyruvate.

The protein belongs to the DapA family. Homotetramer; dimer of dimers.

It is found in the cytoplasm. It carries out the reaction L-aspartate 4-semialdehyde + pyruvate = (2S,4S)-4-hydroxy-2,3,4,5-tetrahydrodipicolinate + H2O + H(+). It participates in amino-acid biosynthesis; L-lysine biosynthesis via DAP pathway; (S)-tetrahydrodipicolinate from L-aspartate: step 3/4. In terms of biological role, catalyzes the condensation of (S)-aspartate-beta-semialdehyde [(S)-ASA] and pyruvate to 4-hydroxy-tetrahydrodipicolinate (HTPA). This Anaeromyxobacter sp. (strain K) protein is 4-hydroxy-tetrahydrodipicolinate synthase.